We begin with the raw amino-acid sequence, 237 residues long: MPESLMNIRVDRKAFAGNTVLQDIDLSLQSGEIVSLLGPSGCGKSTLLRIVAGLEQDFRGSVDNIEGEVAFVFQEPRLMPWLTVEQNIGFSDDAGYDRRWVGQLIEEVGLSGFADALPKALSGGMAQRVAIARGLYSHPTVLLLDEPFSAVDAFTRMKLQDLLLQLAERHAITLLLVTHDVDEALYLSDRVLVMGSRPGTITQQLPVGLQAPRDRRDPLLARLKAQALTELHQAHII.

The ABC transporter domain maps to 5-221 (LMNIRVDRKA…PRDRRDPLLA (217 aa)). 38–45 (GPSGCGKS) provides a ligand contact to ATP.

The protein belongs to the ABC transporter superfamily. Aliphatic sulfonates importer (TC 3.A.1.17.2) family. In terms of assembly, the complex is composed of two ATP-binding proteins (SsuB), two transmembrane proteins (SsuC) and a solute-binding protein (SsuA).

It localises to the cell inner membrane. The catalysed reaction is ATP + H2O + aliphatic sulfonate-[sulfonate-binding protein]Side 1 = ADP + phosphate + aliphatic sulfonateSide 2 + [sulfonate-binding protein]Side 1.. In terms of biological role, part of the ABC transporter complex SsuABC involved in aliphatic sulfonates import. Responsible for energy coupling to the transport system. The chain is Aliphatic sulfonates import ATP-binding protein SsuB 1 from Pseudomonas savastanoi pv. phaseolicola (strain 1448A / Race 6) (Pseudomonas syringae pv. phaseolicola (strain 1448A / Race 6)).